Reading from the N-terminus, the 1466-residue chain is ABC transporter G family member 40 (1466 aa).

Positions 1–21 (MSHRHHAALVASASGRSPSWG) are disordered. The 274-residue stretch at 176-449 (GLIGQFGSSN…FEASGFRCPQ (274 aa)) folds into the ABC transporter 1 domain. ATP is bound at residue 209 to 216 (GPPSSGKS). Residues 527-740 (ESLKAVLCRE…SQNAISINEF (214 aa)) form the ABC transmembrane type-2 1 domain. 6 helical membrane-spanning segments follow: residues 545–565 (FLYI…MTVF), 581–601 (FLGA…SELN), 633–653 (VPVS…VMGF), 664–684 (FLAF…LGAI), 690–710 (IAIS…GFVI), and 776–796 (FWLS…LYIL). Positions 821-831 (YTETRNEEHRS) are enriched in basic and acidic residues. The segment at 821–851 (YTETRNEEHRSRTSTTTSSIPTSANGEGNRP) is disordered. A compositionally biased stretch (low complexity) spans 833–843 (TSTTTSSIPTS). In terms of domain architecture, ABC transporter 2 spans 865 to 1117 (LCFNHLNYYV…KLVEYFETIL (253 aa)). 910-917 (GVSGAGKT) contacts ATP. The ABC transmembrane type-2 2 domain occupies 1190–1404 (IQCVANLWKQ…TIYGVIASQF (215 aa)). 7 helical membrane passes run 1209–1229 (YNSL…TVFW), 1241–1261 (LYNL…TNCM), 1297–1317 (FIYN…MIGY), 1327–1347 (FLFF…MLVA), 1355–1375 (ANIL…FLIF), 1396–1416 (IYGV…VPGG), and 1435–1455 (FLGY…LIFG).

The protein belongs to the ABC transporter superfamily. ABCG family. PDR (TC 3.A.1.205) subfamily.

The protein resides in the membrane. This chain is ABC transporter G family member 40, found in Oryza sativa subsp. japonica (Rice).